A 187-amino-acid polypeptide reads, in one-letter code: MYLYKKNYYGYAESLLDISISENNVEKYINDCFFILSIIQNNQVLILLFKSHFVGKQEKFNIIDKIFSAKIEKILVNFLKVIAKNNLFLHYKQILLKYIKLANSHLSQTWGEIETAFPISSVMTSSFESILSKKLGKKVHLRHKINSKLISGIRIIVDNQIFENSLFSELKLLKQNLKKHLITKNDL.

The protein belongs to the ATPase delta chain family. In terms of assembly, F-type ATPases have 2 components, F(1) - the catalytic core - and F(0) - the membrane proton channel. F(1) has five subunits: alpha(3), beta(3), gamma(1), delta(1), epsilon(1). F(0) has three main subunits: a(1), b(2) and c(10-14). The alpha and beta chains form an alternating ring which encloses part of the gamma chain. F(1) is attached to F(0) by a central stalk formed by the gamma and epsilon chains, while a peripheral stalk is formed by the delta and b chains.

It localises to the cell membrane. In terms of biological role, f(1)F(0) ATP synthase produces ATP from ADP in the presence of a proton or sodium gradient. F-type ATPases consist of two structural domains, F(1) containing the extramembraneous catalytic core and F(0) containing the membrane proton channel, linked together by a central stalk and a peripheral stalk. During catalysis, ATP synthesis in the catalytic domain of F(1) is coupled via a rotary mechanism of the central stalk subunits to proton translocation. Its function is as follows. This protein is part of the stalk that links CF(0) to CF(1). It either transmits conformational changes from CF(0) to CF(1) or is implicated in proton conduction. The chain is ATP synthase subunit delta from Mesomycoplasma hyopneumoniae (strain 7448) (Mycoplasma hyopneumoniae).